Reading from the N-terminus, the 485-residue chain is Probable protein phosphatase 2C 3 (485 aa).

A compositionally biased stretch (low complexity) spans 1–11 (MSSPSPSSEAA). Disordered stretches follow at residues 1-29 (MSSPSPSSEAAAAHHHHHQRRQHAGAAGG) and 43-72 (ARAERPMGSGSRICARDEEDGGGGGGAEGG). Residues 13–23 (AHHHHHQRRQH) show a composition bias toward basic residues. Residues 107-353 (SSSSSSSLAS…DDTTCIVVDM (247 aa)) form the PPM-type phosphatase domain. Mn(2+) is bound by residues Asp129, Gly130, Asp305, and Asp344.

It belongs to the PP2C family. Mg(2+) is required as a cofactor. It depends on Mn(2+) as a cofactor.

The catalysed reaction is O-phospho-L-seryl-[protein] + H2O = L-seryl-[protein] + phosphate. The enzyme catalyses O-phospho-L-threonyl-[protein] + H2O = L-threonyl-[protein] + phosphate. This Oryza sativa subsp. japonica (Rice) protein is Probable protein phosphatase 2C 3.